We begin with the raw amino-acid sequence, 433 residues long: Serine/threonine-protein kinase STK11 (433 aa).

At S31 the chain carries Phosphoserine. N6-acetyllysine is present on residues K44 and K48. Residues 45-90 (LIGKYLMGDLLGEGSYGKVKEVLDSETLCRRAVKILKKKKLRRIPN) are sufficient for interaction with SIRT1. One can recognise a Protein kinase domain in the interval 49–309 (YLMGDLLGEG…IRQIRQHSWF (261 aa)). ATP is bound by residues 55–63 (LGEGSYGKV) and K78. K96 and K97 each carry N6-acetyllysine. The active-site Proton acceptor is D176. A Phosphothreonine; by autocatalysis modification is found at T189. 2 positions are modified to N6-acetyllysine: K296 and K311. Residues 312–331 (KHPPAEAPVPIPPSPDTKDR) are disordered. Residues 316-326 (AEAPVPIPPSP) show a composition bias toward pro residues. Residue S325 is modified to Phosphoserine. T336 bears the Phosphothreonine; by autocatalysis mark. T363 carries the phosphothreonine; by ATM and autocatalysis modification. A disordered region spans residues 397–433 (AAQLSTKSRAEGRAPNPARKACSASSKIRRLSACKQQ). A phosphoserine mark is found at Q399 and S401. An N6-acetyllysine modification is found at K416. C418 carries S-palmitoyl cysteine lipidation. K423 carries the post-translational modification N6-acetyllysine. Basic residues predominate over residues 423-433 (KIRRLSACKQQ). A Phosphoserine; by autocatalysis, PKA, PKC/PRKCZ and RPS6KA1 modification is found at S428. C430 carries the post-translational modification Cysteine methyl ester. A lipid anchor (S-farnesyl cysteine) is attached at C430. N6-acetyllysine is present on K431. A propeptide spans 431-433 (KQQ) (removed in mature form).

It belongs to the protein kinase superfamily. CAMK Ser/Thr protein kinase family. LKB1 subfamily. Catalytic component of a trimeric complex composed of STK11/LKB1, STRAD (STRADA or STRADB) and CAB39/MO25 (CAB39/MO25alpha or CAB39L/MO25beta): the complex tethers STK11/LKB1 in the cytoplasm and stimulates its catalytic activity. Found in a ternary complex composed of SMAD4, STK11/LKB1 and STK11IP. Interacts with p53/TP53, SMAD4, STK11IP and WDR6. Interacts with NR4A1. Interacts with NISCH; this interaction may increase STK11 activity. Interacts with PTEN; leading to PTEN phosphorylation. Interacts with SIRT1; the interaction deacetylates STK11. Interacts with CDKN1A. Requires Mg(2+) as cofactor. Mn(2+) serves as cofactor. Post-translationally, phosphorylated by ATM at Thr-363 following ionizing radiation (IR). Phosphorylation at Ser-428 by RPS6KA1 and/or some PKA is required to inhibit cell growth. Phosphorylation at Ser-428 is also required during neuronal polarization to mediate phosphorylation of BRSK1 and BRSK2. Phosphorylation by PKC/PRKCZ at Ser-399 in isoform 2 promotes metformin (or peroxynitrite)-induced nuclear export of STK11 and activation of AMPK. UV radiation-induced phosphorylation at Thr-363 mediates CDKN1A degradation. In terms of processing, acetylated. Deacetylation at Lys-48 enhances cytoplasmic localization and kinase activity in vitro. In terms of tissue distribution, ubiquitously expressed. Strongest expression in testis and fetal liver.

It localises to the nucleus. The protein localises to the cytoplasm. The protein resides in the membrane. Its subcellular location is the mitochondrion. The catalysed reaction is L-seryl-[protein] + ATP = O-phospho-L-seryl-[protein] + ADP + H(+). It carries out the reaction L-threonyl-[protein] + ATP = O-phospho-L-threonyl-[protein] + ADP + H(+). Activated by forming a complex with STRAD (STRADA or STRADB) and CAB39/MO25 (CAB39/MO25alpha or CAB39L/MO25beta): STRADA (or STRADB)-binding promotes a conformational change of STK11/LKB1 in an active conformation, which is stabilized by CAB39/MO25alpha (or CAB39L/MO25beta) interacting with the STK11/LKB1 activation loop. Sequestration in the nucleus by NR4A1 prevents it from phosphorylating and activating cytoplasmic AMPK. Its function is as follows. Tumor suppressor serine/threonine-protein kinase that controls the activity of AMP-activated protein kinase (AMPK) family members, thereby playing a role in various processes such as cell metabolism, cell polarity, apoptosis and DNA damage response. Acts by phosphorylating the T-loop of AMPK family proteins, thus promoting their activity: phosphorylates PRKAA1, PRKAA2, BRSK1, BRSK2, MARK1, MARK2, MARK3, MARK4, NUAK1, NUAK2, SIK1, SIK2, SIK3 and SNRK but not MELK. Also phosphorylates non-AMPK family proteins such as STRADA, PTEN and possibly p53/TP53. Acts as a key upstream regulator of AMPK by mediating phosphorylation and activation of AMPK catalytic subunits PRKAA1 and PRKAA2 and thereby regulates processes including: inhibition of signaling pathways that promote cell growth and proliferation when energy levels are low, glucose homeostasis in liver, activation of autophagy when cells undergo nutrient deprivation, and B-cell differentiation in the germinal center in response to DNA damage. Also acts as a regulator of cellular polarity by remodeling the actin cytoskeleton. Required for cortical neuron polarization by mediating phosphorylation and activation of BRSK1 and BRSK2, leading to axon initiation and specification. Involved in DNA damage response: interacts with p53/TP53 and recruited to the CDKN1A/WAF1 promoter to participate in transcription activation. Able to phosphorylate p53/TP53; the relevance of such result in vivo is however unclear and phosphorylation may be indirect and mediated by downstream STK11/LKB1 kinase NUAK1. Also acts as a mediator of p53/TP53-dependent apoptosis via interaction with p53/TP53: translocates to the mitochondrion during apoptosis and regulates p53/TP53-dependent apoptosis pathways. Regulates UV radiation-induced DNA damage response mediated by CDKN1A. In association with NUAK1, phosphorylates CDKN1A in response to UV radiation and contributes to its degradation which is necessary for optimal DNA repair. Has a role in spermiogenesis. The polypeptide is Serine/threonine-protein kinase STK11 (Homo sapiens (Human)).